The sequence spans 106 residues: Nucleoid-associated protein MCCL_1934 (106 aa).

Positions 1–34 (MRGGGNMQQMMKQMQKMQKKMAEEQEKLKEERIE) are disordered. Residues 7–16 (MQQMMKQMQK) are compositionally biased toward low complexity. The span at 20–34 (KMAEEQEKLKEERIE) shows a compositional bias: basic and acidic residues.

The protein belongs to the YbaB/EbfC family. In terms of assembly, homodimer.

The protein localises to the cytoplasm. It localises to the nucleoid. Binds to DNA and alters its conformation. May be involved in regulation of gene expression, nucleoid organization and DNA protection. In Macrococcus caseolyticus (strain JCSC5402) (Macrococcoides caseolyticum), this protein is Nucleoid-associated protein MCCL_1934.